The primary structure comprises 354 residues: UDP-N-acetylglucosamine--N-acetylmuramyl-(pentapeptide) pyrophosphoryl-undecaprenol N-acetylglucosamine transferase (354 aa).

UDP-N-acetyl-alpha-D-glucosamine-binding positions include 15–17 (TGG), Asn127, Arg163, Ser191, Ile244, 263–268 (ALTVSE), and Gln288.

Belongs to the glycosyltransferase 28 family. MurG subfamily.

It localises to the cell inner membrane. The catalysed reaction is di-trans,octa-cis-undecaprenyl diphospho-N-acetyl-alpha-D-muramoyl-L-alanyl-D-glutamyl-meso-2,6-diaminopimeloyl-D-alanyl-D-alanine + UDP-N-acetyl-alpha-D-glucosamine = di-trans,octa-cis-undecaprenyl diphospho-[N-acetyl-alpha-D-glucosaminyl-(1-&gt;4)]-N-acetyl-alpha-D-muramoyl-L-alanyl-D-glutamyl-meso-2,6-diaminopimeloyl-D-alanyl-D-alanine + UDP + H(+). It functions in the pathway cell wall biogenesis; peptidoglycan biosynthesis. Its function is as follows. Cell wall formation. Catalyzes the transfer of a GlcNAc subunit on undecaprenyl-pyrophosphoryl-MurNAc-pentapeptide (lipid intermediate I) to form undecaprenyl-pyrophosphoryl-MurNAc-(pentapeptide)GlcNAc (lipid intermediate II). The chain is UDP-N-acetylglucosamine--N-acetylmuramyl-(pentapeptide) pyrophosphoryl-undecaprenol N-acetylglucosamine transferase from Serratia proteamaculans (strain 568).